A 372-amino-acid polypeptide reads, in one-letter code: MGILFEVLKQDSRTRARLGRLTTPHGVVETPVFMPVGTQATVKTMTPEEVRDLGARIILSNTYHLYLRPGHELVREAGGLHRFMHWNGPILTDSGGFQVFSLAPLRKLSDEGVEFRSHIDGSRHFFTPEKVVAVQEALGSDIAMVLDECAPYPCSYKDARTATERTTRWAARARAAWNSDGATALFGIIQGSVYRDLREESTRALVDLDFPGYGIGGLSVGEPKPLMYEALEWVIPLIPEDRPRYLMGVGSPDCLFEGIARGVDMFDCVLPTRMARHGAVFTHTGRLVVRNAPNARDFGPLDPGCTCYTCRHFSRAYVHHLLRAGEVLGIRLTTIHNLHFLLDLARRIREAIAEDRFHSLKEQFLAACLTPA.

The active-site Proton acceptor is the Asp-93. Substrate is bound by residues 93 to 97 (DSGGF), Asp-147, Gln-190, and Gly-217. The interval 248 to 254 (GVGSPDC) is RNA binding. The active-site Nucleophile is Asp-267. Residues 272-276 (TRMAR) are RNA binding; important for wobble base 34 recognition. Zn(2+) is bound by residues Cys-305, Cys-307, Cys-310, and His-336.

This sequence belongs to the queuine tRNA-ribosyltransferase family. As to quaternary structure, homodimer. Within each dimer, one monomer is responsible for RNA recognition and catalysis, while the other monomer binds to the replacement base PreQ1. Zn(2+) is required as a cofactor.

It carries out the reaction 7-aminomethyl-7-carbaguanine + guanosine(34) in tRNA = 7-aminomethyl-7-carbaguanosine(34) in tRNA + guanine. It participates in tRNA modification; tRNA-queuosine biosynthesis. Its function is as follows. Catalyzes the base-exchange of a guanine (G) residue with the queuine precursor 7-aminomethyl-7-deazaguanine (PreQ1) at position 34 (anticodon wobble position) in tRNAs with GU(N) anticodons (tRNA-Asp, -Asn, -His and -Tyr). Catalysis occurs through a double-displacement mechanism. The nucleophile active site attacks the C1' of nucleotide 34 to detach the guanine base from the RNA, forming a covalent enzyme-RNA intermediate. The proton acceptor active site deprotonates the incoming PreQ1, allowing a nucleophilic attack on the C1' of the ribose to form the product. After dissociation, two additional enzymatic reactions on the tRNA convert PreQ1 to queuine (Q), resulting in the hypermodified nucleoside queuosine (7-(((4,5-cis-dihydroxy-2-cyclopenten-1-yl)amino)methyl)-7-deazaguanosine). The polypeptide is Queuine tRNA-ribosyltransferase (Desulforudis audaxviator (strain MP104C)).